Reading from the N-terminus, the 647-residue chain is Transcriptional repressor XBP1 (647 aa).

Polar residues-rich tracts occupy residues 138–148 (SNKTPVSASPT) and 156–170 (STAS…LTKN). Disordered regions lie at residues 138-170 (SNKT…LTKN) and 264-295 (LLSS…STSS). The segment covering 264 to 282 (LLSSSTSSPPKRRTSTGST) has biased composition (low complexity). The HTH APSES-type domain occupies 282 to 395 (TFLDANASSS…PDFPKDCESW (114 aa)). A DNA-binding region (H-T-H motif) is located at residues 318–339 (CQSYKDFLINELGPDQIDLPNL). Low complexity predominate over residues 425-434 (TNFTSTAVAR). Disordered regions lie at residues 425-455 (TNFT…HSKA), 485-508 (KKNS…GPRD), and 612-647 (QNQR…NSKQ). A compositionally biased stretch (basic residues) spans 435–445 (PRQKPRPRPRQ). Residues 493–502 (SSTYTSQTSS) are compositionally biased toward low complexity.

The protein localises to the nucleus. Functionally, transcriptional repressor which binds to the consensus sequence 5'-GCCTCGA[G/A]G[C/A]-3'. Represses CLN1 transcription. This is Transcriptional repressor XBP1 (XBP1) from Saccharomyces cerevisiae (strain ATCC 204508 / S288c) (Baker's yeast).